A 653-amino-acid polypeptide reads, in one-letter code: Rab11 family-interacting protein 5 (653 aa).

The 142-residue stretch at 5–146 (RGAEPAAGPS…AGRAQHTQWY (142 aa)) folds into the C2 domain. Phosphoserine occurs at positions 176, 283, 286, 307, 357, and 367. Residues 269-300 (GPGAELLTRSPSRSSWLSTEGGRDSAQSPKLF) form a disordered region. Over residues 277–286 (RSPSRSSWLS) the composition is skewed to polar residues. 2 disordered regions span residues 342 to 402 (HIYN…AVLG) and 415 to 548 (PGAS…RSSL). A compositionally biased stretch (low complexity) spans 357–368 (SISGSLPSSGSL). Over residues 375-387 (FSEEGPRSTDDTW) the composition is skewed to basic and acidic residues. Phosphoserine is present on residues serine 391 and serine 395. 2 stretches are compositionally biased toward basic and acidic residues: residues 420–430 (PGEEEGARLPE) and 447–460 (VAEK…ERKP). Phosphoserine is present on residues serine 494, serine 538, serine 547, and serine 553. The 63-residue stretch at 586 to 648 (KDSAVLDQSA…ETSPTLLQIP (63 aa)) folds into the FIP-RBD domain.

Interacts with RAB11FIP4. Interacts with NAPG. Interacts with RO60. Interacts with RAB11A that has been activated by GTP binding. In terms of assembly, (Microbial infection) Interacts with Kaposi's sarcoma-associated herpesvirus/HHV-8 protein ORF45; this interaction results in the lysosomal degradation of ORF45 and the inhibition of viral particle release. Phosphorylated on serine and threonine residues. Phosphorylation at Ser-357 is PKA-dependent. In terms of tissue distribution, detected at low levels in heart, brain, placenta, lung, liver, adipocytes, kidney, spleen, skeletal muscle and pancreas.

The protein localises to the cytoplasm. It is found in the recycling endosome membrane. The protein resides in the early endosome membrane. It localises to the golgi apparatus membrane. Its subcellular location is the cytoplasmic vesicle. The protein localises to the secretory vesicle membrane. It is found in the mitochondrion membrane. Functionally, rab effector involved in protein trafficking from apical recycling endosomes to the apical plasma membrane. Involved in insulin granule exocytosis. May regulate V-ATPase intracellular transport in response to extracellular acidosis. In Homo sapiens (Human), this protein is Rab11 family-interacting protein 5.